The following is a 784-amino-acid chain: Serine/threonine-protein kinase DCLK2 (784 aa).

Residues 1 to 45 form a disordered region; that stretch reads MASTRSIELEHFEERDKRPRPGSRRGAPSSSGGSSSSGPKGNGLI. A compositionally biased stretch (basic and acidic residues) spans 7–19; the sequence is IELEHFEERDKRP. Positions 24 to 39 are enriched in low complexity; it reads RRGAPSSSGGSSSSGP. Position 61 is a phosphothreonine (Thr-61). Doublecortin domains follow at residues 72 to 158 and 197 to 280; these read KKAR…VDYT and KLVT…AQDD. Composition is skewed to low complexity over residues 300-312 and 341-364; these read AVKYSGSKSPGPS and TPSSQLSTPKSTKSSSSSPTSPGS. The tract at residues 300 to 368 is disordered; sequence AVKYSGSKSP…PTSPGSFRGL (69 aa). The residue at position 379 (Ser-379) is a Phosphoserine. The Protein kinase domain maps to 411 to 668; that stretch reads YKIGKVIGDG…AGEILSHPWV (258 aa). ATP is bound by residues 417 to 425 and Lys-440; that span reads IGDGNFAVV. Asp-532 functions as the Proton acceptor in the catalytic mechanism. The residue at position 664 (Ser-664) is a Phosphoserine. A Phosphothreonine modification is found at Thr-683. Positions 724–784 are disordered; that stretch reads CQDSSRPGME…RAGTWRRHRD (61 aa). Over residues 741 to 758 the composition is skewed to low complexity; it reads SASAEEPPVSAPAAAPAP.

The protein belongs to the protein kinase superfamily. CAMK Ser/Thr protein kinase family. CaMK subfamily. As to quaternary structure, binds to and stabilizes microtubules. Interacts with MAPK8IP1/JIP-1, MAPK8IP2/JIP-2, MAPK9/JNK2, PPP1R9B/NEURABIN-2 and actin. Autophosphorylated.

It localises to the cytoplasm. The protein localises to the cytoskeleton. The catalysed reaction is L-seryl-[protein] + ATP = O-phospho-L-seryl-[protein] + ADP + H(+). The enzyme catalyses L-threonyl-[protein] + ATP = O-phospho-L-threonyl-[protein] + ADP + H(+). In terms of biological role, protein kinase with a significantly reduced Ca(2+)/CAM affinity and dependence compared to other members of the CaMK family. May play a role in the down-regulation of CRE-dependent gene activation probably by phosphorylation of the CREB coactivator CRTC2/TORC2 and the resulting retention of TORC2 in the cytoplasm. In Ailuropoda melanoleuca (Giant panda), this protein is Serine/threonine-protein kinase DCLK2 (DCLK2).